Consider the following 413-residue polypeptide: Serine hydroxymethyltransferase (413 aa).

Residues Leu-120 and 124–126 (GHL) contribute to the (6S)-5,6,7,8-tetrahydrofolate site. The residue at position 228 (Lys-228) is an N6-(pyridoxal phosphate)lysine.

It belongs to the SHMT family. In terms of assembly, homodimer. Requires pyridoxal 5'-phosphate as cofactor.

It is found in the cytoplasm. It catalyses the reaction (6R)-5,10-methylene-5,6,7,8-tetrahydrofolate + glycine + H2O = (6S)-5,6,7,8-tetrahydrofolate + L-serine. Its pathway is one-carbon metabolism; tetrahydrofolate interconversion. It functions in the pathway amino-acid biosynthesis; glycine biosynthesis; glycine from L-serine: step 1/1. In terms of biological role, catalyzes the reversible interconversion of serine and glycine with tetrahydrofolate (THF) serving as the one-carbon carrier. This reaction serves as the major source of one-carbon groups required for the biosynthesis of purines, thymidylate, methionine, and other important biomolecules. Also exhibits THF-independent aldolase activity toward beta-hydroxyamino acids, producing glycine and aldehydes, via a retro-aldol mechanism. This is Serine hydroxymethyltransferase from Agathobacter rectalis (strain ATCC 33656 / DSM 3377 / JCM 17463 / KCTC 5835 / VPI 0990) (Eubacterium rectale).